We begin with the raw amino-acid sequence, 273 residues long: 4-hydroxy-tetrahydrodipicolinate reductase (273 aa).

NAD(+)-binding positions include 11 to 16 and Glu-36; that span reads GAGGRM. Arg-37 is an NADP(+) binding site. Residues 100–102 and 124–127 each bind NAD(+); these read GTT and AANY. The Proton donor/acceptor role is filled by His-157. His-158 serves as a coordination point for (S)-2,3,4,5-tetrahydrodipicolinate. Lys-161 (proton donor) is an active-site residue. 167-168 serves as a coordination point for (S)-2,3,4,5-tetrahydrodipicolinate; sequence GT.

This sequence belongs to the DapB family.

It localises to the cytoplasm. It carries out the reaction (S)-2,3,4,5-tetrahydrodipicolinate + NAD(+) + H2O = (2S,4S)-4-hydroxy-2,3,4,5-tetrahydrodipicolinate + NADH + H(+). It catalyses the reaction (S)-2,3,4,5-tetrahydrodipicolinate + NADP(+) + H2O = (2S,4S)-4-hydroxy-2,3,4,5-tetrahydrodipicolinate + NADPH + H(+). It functions in the pathway amino-acid biosynthesis; L-lysine biosynthesis via DAP pathway; (S)-tetrahydrodipicolinate from L-aspartate: step 4/4. In terms of biological role, catalyzes the conversion of 4-hydroxy-tetrahydrodipicolinate (HTPA) to tetrahydrodipicolinate. The chain is 4-hydroxy-tetrahydrodipicolinate reductase from Acinetobacter baumannii (strain ACICU).